Here is a 216-residue protein sequence, read N- to C-terminus: ATP-dependent dethiobiotin synthetase BioD (216 aa).

13–18 (EVGKTY) provides a ligand contact to ATP. Threonine 17 is a Mg(2+) binding site. The active site involves lysine 38. Threonine 42 contributes to the substrate binding site. ATP is bound by residues aspartate 47 and 112-115 (EGVG). The Mg(2+) site is built by aspartate 47 and glutamate 112.

It belongs to the dethiobiotin synthetase family. In terms of assembly, homodimer. Mg(2+) is required as a cofactor.

The protein resides in the cytoplasm. The catalysed reaction is (7R,8S)-7,8-diammoniononanoate + CO2 + ATP = (4R,5S)-dethiobiotin + ADP + phosphate + 3 H(+). Its pathway is cofactor biosynthesis; biotin biosynthesis; biotin from 7,8-diaminononanoate: step 1/2. In terms of biological role, catalyzes a mechanistically unusual reaction, the ATP-dependent insertion of CO2 between the N7 and N8 nitrogen atoms of 7,8-diaminopelargonic acid (DAPA, also called 7,8-diammoniononanoate) to form a ureido ring. The sequence is that of ATP-dependent dethiobiotin synthetase BioD from Endomicrobium trichonymphae.